The sequence spans 454 residues: Bifunctional protein GlmU (454 aa).

The pyrophosphorylase stretch occupies residues 1–225 (MNIVILAAGM…VWETLGVNSK (225 aa)). Residues 6–9 (LAAG), Lys-20, Gln-71, 76–77 (GT), 98–100 (YGD), Gly-135, Glu-150, Asn-165, and Asn-223 each bind UDP-N-acetyl-alpha-D-glucosamine. Asp-100 serves as a coordination point for Mg(2+). Asn-223 is a binding site for Mg(2+). Positions 226-246 (LQLAEVERIHQGNQARRLLEA) are linker. The segment at 247–454 (GVTLLDPARI…WQRPVKQPKQ (208 aa)) is N-acetyltransferase. UDP-N-acetyl-alpha-D-glucosamine-binding residues include Arg-329 and Lys-347. His-359 (proton acceptor) is an active-site residue. 2 residues coordinate UDP-N-acetyl-alpha-D-glucosamine: Tyr-362 and Asn-373. Acetyl-CoA is bound by residues Ala-376, 382 to 383 (NY), Ser-401, Ala-419, and Arg-436.

In the N-terminal section; belongs to the N-acetylglucosamine-1-phosphate uridyltransferase family. This sequence in the C-terminal section; belongs to the transferase hexapeptide repeat family. In terms of assembly, homotrimer. Mg(2+) is required as a cofactor.

It is found in the cytoplasm. The enzyme catalyses alpha-D-glucosamine 1-phosphate + acetyl-CoA = N-acetyl-alpha-D-glucosamine 1-phosphate + CoA + H(+). The catalysed reaction is N-acetyl-alpha-D-glucosamine 1-phosphate + UTP + H(+) = UDP-N-acetyl-alpha-D-glucosamine + diphosphate. The protein operates within nucleotide-sugar biosynthesis; UDP-N-acetyl-alpha-D-glucosamine biosynthesis; N-acetyl-alpha-D-glucosamine 1-phosphate from alpha-D-glucosamine 6-phosphate (route II): step 2/2. Its pathway is nucleotide-sugar biosynthesis; UDP-N-acetyl-alpha-D-glucosamine biosynthesis; UDP-N-acetyl-alpha-D-glucosamine from N-acetyl-alpha-D-glucosamine 1-phosphate: step 1/1. It functions in the pathway bacterial outer membrane biogenesis; LPS lipid A biosynthesis. Catalyzes the last two sequential reactions in the de novo biosynthetic pathway for UDP-N-acetylglucosamine (UDP-GlcNAc). The C-terminal domain catalyzes the transfer of acetyl group from acetyl coenzyme A to glucosamine-1-phosphate (GlcN-1-P) to produce N-acetylglucosamine-1-phosphate (GlcNAc-1-P), which is converted into UDP-GlcNAc by the transfer of uridine 5-monophosphate (from uridine 5-triphosphate), a reaction catalyzed by the N-terminal domain. This is Bifunctional protein GlmU from Cupriavidus taiwanensis (strain DSM 17343 / BCRC 17206 / CCUG 44338 / CIP 107171 / LMG 19424 / R1) (Ralstonia taiwanensis (strain LMG 19424)).